The chain runs to 553 residues: Carboxypeptidase Y homolog A (553 aa).

The signal sequence occupies residues 1-17 (MRVLSTTLLIGAAAAAV). Residues 18–134 (SPPQQVLQAP…RLEAFDLRVK (117 aa)) constitute a propeptide that is removed on maturation. 5 cysteine pairs are disulfide-bonded: cysteine 189–cysteine 428, cysteine 323–cysteine 337, cysteine 347–cysteine 370, cysteine 354–cysteine 363, and cysteine 392–cysteine 398. Asparagine 220 carries N-linked (GlcNAc...) asparagine glycosylation. Serine 276 is a catalytic residue. Aspartate 467 is an active-site residue. N-linked (GlcNAc...) asparagine glycosylation is present at asparagine 518. The active site involves histidine 529.

This sequence belongs to the peptidase S10 family.

Its subcellular location is the vacuole. It catalyses the reaction Release of a C-terminal amino acid with broad specificity.. Functionally, vacuolar carboxypeptidase involved in degradation of small peptides. Digests preferentially peptides containing an aliphatic or hydrophobic residue in P1' position, as well as methionine, leucine or phenylalanine in P1 position of ester substrate. The protein is Carboxypeptidase Y homolog A (cpyA) of Talaromyces stipitatus (strain ATCC 10500 / CBS 375.48 / QM 6759 / NRRL 1006) (Penicillium stipitatum).